Consider the following 193-residue polypeptide: Superoxide dismutase [Fe] (193 aa).

A Fe cation-binding site is contributed by His-27. Lys-51 bears the N6-acetyllysine mark. Residues His-74, Asp-157, and His-161 each contribute to the Fe cation site.

It belongs to the iron/manganese superoxide dismutase family. As to quaternary structure, homodimer. It depends on Fe cation as a cofactor.

It catalyses the reaction 2 superoxide + 2 H(+) = H2O2 + O2. Destroys superoxide anion radicals which are normally produced within the cells and which are toxic to biological systems. This Escherichia coli O157:H7 protein is Superoxide dismutase [Fe] (sodB).